Here is a 314-residue protein sequence, read N- to C-terminus: Methionyl-tRNA formyltransferase (314 aa).

Residue 111–114 (SLLP) participates in (6S)-5,6,7,8-tetrahydrofolate binding.

Belongs to the Fmt family.

It catalyses the reaction L-methionyl-tRNA(fMet) + (6R)-10-formyltetrahydrofolate = N-formyl-L-methionyl-tRNA(fMet) + (6S)-5,6,7,8-tetrahydrofolate + H(+). Attaches a formyl group to the free amino group of methionyl-tRNA(fMet). The formyl group appears to play a dual role in the initiator identity of N-formylmethionyl-tRNA by promoting its recognition by IF2 and preventing the misappropriation of this tRNA by the elongation apparatus. In Nitrobacter winogradskyi (strain ATCC 25391 / DSM 10237 / CIP 104748 / NCIMB 11846 / Nb-255), this protein is Methionyl-tRNA formyltransferase.